Consider the following 235-residue polypeptide: Dual specificity protein phosphatase 15 (235 aa).

Gly-2 is lipidated: N-myristoyl glycine. Residues 4–144 form the Tyrosine-protein phosphatase domain; the sequence is GMTKVLPGLY…LEEFGWANSQ (141 aa). Cys-88 serves as the catalytic Phosphocysteine intermediate. Residues 183–193 are compositionally biased toward low complexity; sequence AASATTASSAA. The interval 183-212 is disordered; sequence AASATTASSAAEGTLQRLVPRSPRDSHQPL.

It belongs to the protein-tyrosine phosphatase family. Non-receptor class dual specificity subfamily. In terms of tissue distribution, isoform 1 is expressed in testis; predominantly in developing spermatocytes (at protein level). Isoform 2 is highly expressed in testis. Expressed in spinal cord and specifically in oligodendroglial cells. Expressed in embryonic brain cortex; down-regulated in mice with experimental autoimmune encephalomyelitis (EAE).

The protein localises to the cell membrane. It catalyses the reaction O-phospho-L-tyrosyl-[protein] + H2O = L-tyrosyl-[protein] + phosphate. The enzyme catalyses O-phospho-L-seryl-[protein] + H2O = L-seryl-[protein] + phosphate. It carries out the reaction O-phospho-L-threonyl-[protein] + H2O = L-threonyl-[protein] + phosphate. In terms of biological role, may dephosphorylate MAPK13, ATF2, ERBB3, PDGFRB and SNX6. May play a role in the regulation of oligodendrocyte differentiation. May play a role in the regulation of myelin formation. Involved in the regulation of Erk1/2 phosphorylation in Schwann cells; the signaling may be linked to the regulation of myelination. This is Dual specificity protein phosphatase 15 from Mus musculus (Mouse).